The following is a 90-amino-acid chain: Small ribosomal subunit protein uS19 (90 aa).

The protein belongs to the universal ribosomal protein uS19 family.

Protein S19 forms a complex with S13 that binds strongly to the 16S ribosomal RNA. In Clostridium beijerinckii (strain ATCC 51743 / NCIMB 8052) (Clostridium acetobutylicum), this protein is Small ribosomal subunit protein uS19.